The primary structure comprises 258 residues: Small ribosomal subunit protein eS1 (258 aa).

The interval 235-258 is disordered; that stretch reads VASSGDAGSAVRRDGYEPPVQESV.

The protein belongs to the eukaryotic ribosomal protein eS1 family. As to quaternary structure, component of the small ribosomal subunit. Mature ribosomes consist of a small (40S) and a large (60S) subunit. The 40S subunit contains about 33 different proteins and 1 molecule of RNA (18S). The 60S subunit contains about 49 different proteins and 3 molecules of RNA (28S, 5.8S and 5S).

It localises to the cytoplasm. The sequence is that of Small ribosomal subunit protein eS1 from Trichoplax adhaerens (Trichoplax reptans).